The primary structure comprises 236 residues: MGQKINPIGLRLGINRTWDSRWFAGKAEYGKLLHEDVKIREILHKELKQAAVARIVIERPHKKCRVTIHSARPGVVIGKKGADIDKLRKRVADITSSDVVINIVEIRKPELDATLVAESIAQQLERRVAFRRAMKRAVQSAMRLGAEGIRINCSGRLGGAEIARMEWYREGRVPLHTLRADIDYGVATAFTTFGTCGVKVWIFKGEILEHDPMAQDKRMNEGGGESPSPRSRRDAA.

The KH type-2 domain occupies 39–107 (IREILHKELK…DVVINIVEIR (69 aa)). The interval 213-236 (MAQDKRMNEGGGESPSPRSRRDAA) is disordered.

This sequence belongs to the universal ribosomal protein uS3 family. In terms of assembly, part of the 30S ribosomal subunit. Forms a tight complex with proteins S10 and S14.

Binds the lower part of the 30S subunit head. Binds mRNA in the 70S ribosome, positioning it for translation. This chain is Small ribosomal subunit protein uS3, found in Bradyrhizobium sp. (strain ORS 278).